A 328-amino-acid chain; its full sequence is Probable tRNA pseudouridine synthase B (328 aa).

Aspartate 71 serves as the catalytic Nucleophile. Residues 238–313 form the PUA domain; that stretch reads LPKIWVRDSA…LVARVDRVIM (76 aa).

This sequence belongs to the pseudouridine synthase TruB family. Type 2 subfamily.

The enzyme catalyses uridine(55) in tRNA = pseudouridine(55) in tRNA. In terms of biological role, could be responsible for synthesis of pseudouridine from uracil-55 in the psi GC loop of transfer RNAs. This is Probable tRNA pseudouridine synthase B from Pyrobaculum islandicum (strain DSM 4184 / JCM 9189 / GEO3).